A 67-amino-acid polypeptide reads, in one-letter code: Peptide Hp1239 (67 aa).

The signal sequence occupies residues 1-23 (MKTQFTVLLITLVLFQMLSQSEA). At F36 the chain carries Phenylalanine amide. Residues 40-67 (GLSDLSDLDELFDGEITKADLDLLREIM) constitute a propeptide that is removed on maturation.

The protein belongs to the non-disulfide-bridged peptide (NDBP) superfamily. Short antimicrobial peptide (group 4) family. As to expression, expressed by the venom gland.

It is found in the secreted. The protein localises to the target cell membrane. Functionally, amphipathic peptide with antibacterial activities. Shows antiviral activities against the herpes simplex virus type-1. It potently inhibits the initial infection by provoking the rupture of viral envelop and the dissociation of proteins from the virions (EC(50) is 0.41 uM). It also effectively inhibits viral attachment (EC(50) is 5.73 uM), viral entry (EC(50) is 4.32 uM) and viral proliferation after infection (EC(50) is 8.41 uM). Morever, it enters mammalian tested cells (Vero) and reduces the intracellular infectivity. The sequence is that of Peptide Hp1239 from Heterometrus petersii (Asian forest scorpion).